We begin with the raw amino-acid sequence, 928 residues long: G-protein coupled receptor family C group 6 member A (928 aa).

A signal peptide spans 1–20 (MALLITVVTCFMIILDTSQS). Topologically, residues 21 to 594 (CHTPDDFVAI…EYLDWDDSLA (574 aa)) are extracellular. Residues Asn-332, Asn-555, and Asn-567 are each glycosylated (N-linked (GlcNAc...) asparagine). The helical transmembrane segment at 595 to 615 (LLLIALSLLGIAFVLAIGIIF) threads the bilayer. At 616–630 (TRNLKTPVVKSSGGL) the chain is on the cytoplasmic side. The chain crosses the membrane as a helical span at residues 631–651 (VVCYVMLICHALNFASTGFFI). Residues 652–669 (GEPQDFACKTRQTLFGVS) are Extracellular-facing. A helical membrane pass occupies residues 670 to 690 (FTLCVSCILTKSLKILLAFSF). The Cytoplasmic segment spans residues 691–706 (DPKLTMFLKCLYRPVP). The chain crosses the membrane as a helical span at residues 707-727 (IVLTCTGIQVVICTLWLVLAA). Residues 728–750 (PSVEENISLPRVIILECEEGSAL) lie on the Extracellular side of the membrane. The chain crosses the membrane as a helical span at residues 751–771 (AFGTMLGYITVLAFICFVFAF). The Cytoplasmic segment spans residues 772-784 (KGRKLPENYNEAK). A helical membrane pass occupies residues 785-805 (FLTFGMLIYFIAWITFIPVYT). Residues 806-812 (TTFGKYL) lie on the Extracellular side of the membrane. Residues 813-833 (PAVEIIVILISNYGILCCIFF) form a helical membrane-spanning segment. Over 834–928 (PKCYIILCKQ…TLRQKRSSSI (95 aa)) the chain is Cytoplasmic.

Belongs to the G-protein coupled receptor 3 family. As to quaternary structure, homodimer; disulfide-linked. Post-translationally, N-glycosylated. In terms of tissue distribution, expressed at high level in liver, lung, spleen and heart. Expressed at lower level in kidney, skeletal muscle and brain. Expressed in 7 dpc, 11 dpc, 15 dpc and 17 dpc embryos.

It is found in the cell membrane. Its function is as follows. Receptor activated by multiple ligands, including osteocalcin (BGLAP), basic amino acids, and various cations. Activated by amino acids with a preference for basic amino acids such as L-Lys, L-Arg and L-ornithine but also by small and polar amino acids. The L-alpha amino acids respond is augmented by divalent cations Ca(2+) and Mg(2+). Seems to act through a G(q)/G(11) and G(i)-coupled pathway. Regulates testosterone production by acting as a ligand for uncarboxylated osteocalcin hormone: osteocalcin-binding at the surface of Leydig cells initiates a signaling response that promotes the expression of enzymes required for testosterone synthesis in a CREB-dependent manner. Mediates the non-genomic effects of androgens in multiple tissue. May coordinate nutritional and hormonal anabolic signals through the sensing of extracellular amino acids, osteocalcin, divalent ions and its responsiveness to anabolic steroids. This Mus musculus (Mouse) protein is G-protein coupled receptor family C group 6 member A (Gprc6a).